The primary structure comprises 441 residues: GTPase Der (441 aa).

2 EngA-type G domains span residues 4 to 169 and 178 to 353; these read PVVA…PEDI and IKVA…DQAA. Residues 10–17, 57–61, 120–123, 184–191, 231–235, and 296–299 each bind GTP; these read GRPNVGKS, DTGGI, NKVD, GKPNAGKS, DTAGI, and NKWD. The KH-like domain occupies 354–438; sequence FRISTGMLND…PIRFIHRQRE (85 aa).

The protein belongs to the TRAFAC class TrmE-Era-EngA-EngB-Septin-like GTPase superfamily. EngA (Der) GTPase family. In terms of assembly, associates with the 50S ribosomal subunit.

Functionally, GTPase that plays an essential role in the late steps of ribosome biogenesis. This is GTPase Der from Ruminiclostridium cellulolyticum (strain ATCC 35319 / DSM 5812 / JCM 6584 / H10) (Clostridium cellulolyticum).